Here is a 266-residue protein sequence, read N- to C-terminus: MLRFLVLATLVLYGHSTRDFPETNARVVGGTEARKNPWPSQISLQYLSGGKWYHTCGGTLIRQNWVMTAAHCVDRKMTFRVVAGEHNLSQNDGTEQRVSVQKIVVHPYWNSNNVAAGYDIALLRLAQRVTLNNYVQLGVLPAAGTILANNNPCYITGWGMTKTNGQLAQALQQAYLPSVDYATCSSSSYWGSTVKSTMVCAGGDGIRSGCQGDSGGPLHCLVNGKYAVHGVTSFVSSLGCNVSRKPTVFTRVSAYISWINNVIASN.

Residues 1–16 (MLRFLVLATLVLYGHS) form the signal peptide. Positions 17–26 (TRDFPETNAR) are cleaved as a propeptide — activation peptide. The 238-residue stretch at 27–264 (VVGGTEARKN…YISWINNVIA (238 aa)) folds into the Peptidase S1 domain. Residues cysteine 56 and cysteine 72 are joined by a disulfide bond. Histidine 71 serves as the catalytic Charge relay system. Glutamate 85, asparagine 87, glutamine 90, and glutamate 95 together coordinate Ca(2+). N-linked (GlcNAc...) asparagine glycosylation is present at asparagine 87. Aspartate 119 acts as the Charge relay system in catalysis. 3 cysteine pairs are disulfide-bonded: cysteine 153-cysteine 220, cysteine 184-cysteine 200, and cysteine 210-cysteine 240. Serine 214 acts as the Charge relay system in catalysis. An N-linked (GlcNAc...) asparagine glycan is attached at asparagine 241.

This sequence belongs to the peptidase S1 family. Elastase subfamily. Requires Ca(2+) as cofactor.

It localises to the secreted. It carries out the reaction Hydrolysis of proteins, including elastin. Preferential cleavage: Ala-|-Xaa.. Its function is as follows. Serine proteases that hydrolyze many proteins in addition to elastin. This is Chymotrypsin-like elastase family member 1 (CELA1) from Felis catus (Cat).